A 425-amino-acid chain; its full sequence is SrfA-induced gene G protein (425 aa).

3 N-linked (GlcNAc...) asparagine glycosylation sites follow: Asn-25, Asn-28, and Asn-36. 3 coiled-coil regions span residues 41-91 (RDSE…RIRN), 172-208 (HEKQ…MKRT), and 292-340 (KFGQ…NYNI). Residues 91–113 (NVFKVLITILVGSIIYGTYTNQF) form a helical membrane-spanning segment. The tract at residues 393–413 (KKPHADSNGHPKPYPHHHLLN) is disordered.

It is found in the membrane. The chain is SrfA-induced gene G protein (sigG) from Dictyostelium discoideum (Social amoeba).